The sequence spans 210 residues: Imidazoleglycerol-phosphate dehydratase (210 aa).

This sequence belongs to the imidazoleglycerol-phosphate dehydratase family.

It localises to the cytoplasm. It carries out the reaction D-erythro-1-(imidazol-4-yl)glycerol 3-phosphate = 3-(imidazol-4-yl)-2-oxopropyl phosphate + H2O. The protein operates within amino-acid biosynthesis; L-histidine biosynthesis; L-histidine from 5-phospho-alpha-D-ribose 1-diphosphate: step 6/9. In Mycobacterium marinum (strain ATCC BAA-535 / M), this protein is Imidazoleglycerol-phosphate dehydratase.